The primary structure comprises 124 residues: Small ribosomal subunit protein bS6 (124 aa).

It belongs to the bacterial ribosomal protein bS6 family.

In terms of biological role, binds together with bS18 to 16S ribosomal RNA. The polypeptide is Small ribosomal subunit protein bS6 (Chromobacterium violaceum (strain ATCC 12472 / DSM 30191 / JCM 1249 / CCUG 213 / NBRC 12614 / NCIMB 9131 / NCTC 9757 / MK)).